Consider the following 110-residue polypeptide: Minor capsid protein VP2 (110 aa).

It belongs to the vesivirus VP2 protein family. As to quaternary structure, homooligomer. The portal-like structure consists in 12 copies of VP2. Interacts with capsid protein VP1.

The protein localises to the virion. It is found in the host cytoplasm. In terms of biological role, minor structural protein that forms a portal-like structure at a unique three-fold axis of symmetry, following binding to the host receptor. The channel formed by VP2 may allow the delivery of the viral genome through the host endosomal membrane. This chain is Minor capsid protein VP2, found in Otariidae (fur seals &amp; sea lions).